The following is a 591-amino-acid chain: Fanconi anemia group C protein homolog (591 aa).

Belongs to the multisubunit FA complex composed of FANCA, FANCB, FANCC, FANCE, FANCF, FANCG, FANCL/PHF9 and FANCM. This complex may also include HSP70. Interacts with ZBTB32. Upon IFNG induction, interacts with STAT1. Interacts with CDK1. Interacts with EIF2AK2. As to expression, ubiquitous.

Its subcellular location is the nucleus. It is found in the cytoplasm. Its function is as follows. DNA repair protein that may operate in a postreplication repair or a cell cycle checkpoint function. May be implicated in interstrand DNA cross-link repair and in the maintenance of normal chromosome stability. Upon IFNG induction, may facilitate STAT1 activation by recruiting STAT1 to IFNGR1. This Mus musculus (Mouse) protein is Fanconi anemia group C protein homolog (Fancc).